Reading from the N-terminus, the 147-residue chain is Hemoglobin subunit epsilon (147 aa).

Positions 3-147 (HFTAEEKAAV…VAIALAHKYH (145 aa)) constitute a Globin domain. Serine 14 and serine 51 each carry phosphoserine. Residues histidine 64 and histidine 93 each coordinate heme b.

The protein belongs to the globin family. Heterotetramer of two alpha chains and two epsilon chains in early embryonic hemoglobin Gower-2; two zeta chains and two epsilon chains in early embryonic hemoglobin Gower-1. Red blood cells.

Its function is as follows. The epsilon chain is a beta-type chain of early mammalian embryonic hemoglobin. The sequence is that of Hemoglobin subunit epsilon (HBE1) from Symphalangus syndactylus (Siamang).